We begin with the raw amino-acid sequence, 686 residues long: Mannan-binding lectin serine protease 2 (686 aa).

The first 15 residues, 1 to 15 (MRLLTLLGLLCGSVA), serve as a signal peptide directing secretion. Positions 16 to 137 (TPLGPKWPEP…TGFEAFYAAE (122 aa)) constitute a CUB 1 domain. Ca(2+) is bound by residues Glu-67, Asp-75, Asp-120, Ser-122, Asn-123, Asp-138, Ile-139, and Glu-141. A disulfide bond links Cys-72 and Cys-90. The 44-residue stretch at 138 to 181 (DIDECQVAPGEAPTCDHHCHNHLGGFYCSCRAGYVLHRNKRTCS) folds into the EGF-like; calcium-binding domain. Disulfide bonds link Cys-142-Cys-156, Cys-152-Cys-165, Cys-167-Cys-180, Cys-184-Cys-211, Cys-241-Cys-259, Cys-300-Cys-348, Cys-328-Cys-361, Cys-366-Cys-412, Cys-396-Cys-430, Cys-434-Cys-552, Cys-598-Cys-618, and Cys-629-Cys-660. Asn-158, His-159, and Gly-162 together coordinate Ca(2+). The residue at position 158 (Asn-158) is a (3R)-3-hydroxyasparagine. A CUB 2 domain is found at 184-296 (CSGQVFTQRS…TGWKIHYTST (113 aa)). 2 Sushi domains span residues 298-363 (QPCP…ACSI) and 364-432 (VDCG…VCEP). The region spanning 445–684 (IYGGQKAKPG…YIPWIENIIS (240 aa)) is the Peptidase S1 domain. Residues His-483 and Asp-532 each act as charge relay system in the active site. The Charge relay system role is filled by Ser-633.

It belongs to the peptidase S1 family. In terms of assembly, homodimer; disulfide-linked. Binds MBL2. Isoform 2 binds to MASP1. Binds SERPING1. Dimerization and MBL2 binding requires calcium ions. Post-translationally, the iron and 2-oxoglutarate dependent 3-hydroxylation of aspartate and asparagine is (R) stereospecific within EGF domains. Activated by cleavage after Arg-444. The uncleaved zymogen is inactive towards synthetic substrates, but has sufficient activity to effect autocatalytic cleavage. As to expression, plasma.

Its subcellular location is the secreted. It carries out the reaction Selective cleavage after Arg-223 in complement component C2 (-Ser-Leu-Gly-Arg-|-Lys-Ile-Gln-Ile) and after Arg-76 in complement component C4 (-Gly-Leu-Gln-Arg-|-Ala-Leu-Glu-Ile).. Serum protease that plays an important role in the activation of the complement system via mannose-binding lectin. After activation by auto-catalytic cleavage it cleaves C2 and C4, leading to their activation and to the formation of C3 convertase. The protein is Mannan-binding lectin serine protease 2 (MASP2) of Homo sapiens (Human).